The primary structure comprises 595 residues: Sucrose transport protein SUT4 (595 aa).

The Cytoplasmic segment spans residues Met1–Lys61. The segment at Ser29 to Arg55 is disordered. Residues Leu62–Leu82 form a helical membrane-spanning segment. The Extracellular segment spans residues Leu83 to Ala97. Residues Ser98–Trp118 form a helical membrane-spanning segment. Topologically, residues Ser119–Arg130 are cytoplasmic. Residues Pro131–Ala151 traverse the membrane as a helical segment. Topologically, residues Asp152–Arg173 are extracellular. Residues Ala174–Gly194 form a helical membrane-spanning segment. Residues Pro195–Asn213 lie on the Cytoplasmic side of the membrane. The helical transmembrane segment at Ala214 to Gly234 threads the bilayer. At Asn235–Lys256 the chain is on the extracellular side. The helical transmembrane segment at Ala257–Ala277 threads the bilayer. Residues Glu278–Gly365 lie on the Cytoplasmic side of the membrane. The tract at residues Ser291–Asn340 is disordered. The segment covering Thr320–Ser334 has biased composition (polar residues). The chain crosses the membrane as a helical span at residues Met366 to Phe386. Over Asp387–Gly417 the chain is Extracellular. N-linked (GlcNAc...) asparagine glycosylation is present at Asn403. A helical transmembrane segment spans residues Ala418–Leu438. Residues Cys439–Val447 are Cytoplasmic-facing. The chain crosses the membrane as a helical span at residues Trp448 to Ile468. The Extracellular portion of the chain corresponds to Ser469–Ala491. An N-linked (GlcNAc...) asparagine glycan is attached at Asn484. Residues Leu492–Val512 form a helical membrane-spanning segment. At Thr513 to Gly525 the chain is on the cytoplasmic side. Residues Leu526–Ala546 form a helical membrane-spanning segment. Topologically, residues Gly547–Gly556 are extracellular. A helical membrane pass occupies residues Asn557–Leu577. Topologically, residues Lys578–Gly595 are cytoplasmic.

It belongs to the glycoside-pentoside-hexuronide (GPH) cation symporter transporter (TC 2.A.2.4) family. In terms of assembly, homodimer.

Its subcellular location is the cell membrane. It participates in glycan biosynthesis; sucrose metabolism. Responsible for the transport of sucrose into the cell, with the concomitant uptake of protons (symport system). May also transport other glucosides. The polypeptide is Sucrose transport protein SUT4 (SUT4) (Oryza sativa subsp. indica (Rice)).